The primary structure comprises 199 residues: Peptidyl-tRNA hydrolase (199 aa).

Tyr-18 is a binding site for tRNA. The active-site Proton acceptor is the His-23. Positions 69, 71, and 117 each coordinate tRNA.

It belongs to the PTH family. As to quaternary structure, monomer.

It is found in the cytoplasm. The catalysed reaction is an N-acyl-L-alpha-aminoacyl-tRNA + H2O = an N-acyl-L-amino acid + a tRNA + H(+). Its function is as follows. Hydrolyzes ribosome-free peptidyl-tRNAs (with 1 or more amino acids incorporated), which drop off the ribosome during protein synthesis, or as a result of ribosome stalling. Functionally, catalyzes the release of premature peptidyl moieties from peptidyl-tRNA molecules trapped in stalled 50S ribosomal subunits, and thus maintains levels of free tRNAs and 50S ribosomes. This is Peptidyl-tRNA hydrolase from Prochlorococcus marinus (strain MIT 9515).